The sequence spans 107 residues: U1-lycotoxin-Ls1e (107 aa).

A signal peptide spans 1–20; the sequence is MMKVLVVFALLVTLISYSSS. Residues 21–41 constitute a propeptide that is removed on maturation; sequence EGIDDLEADELLSLMANEQTR. 4 disulfide bridges follow: Cys-44–Cys-59, Cys-51–Cys-68, Cys-58–Cys-86, and Cys-70–Cys-84.

The protein belongs to the neurotoxin 19 (CSTX) family. 04 (U1-Lctx) subfamily. Expressed by the venom gland.

It is found in the secreted. This chain is U1-lycotoxin-Ls1e, found in Lycosa singoriensis (Wolf spider).